Here is a 119-residue protein sequence, read N- to C-terminus: Small ribosomal subunit protein bS16 (119 aa).

A compositionally biased stretch (basic and acidic residues) spans 89 to 103; that stretch reads TTKSTKEKAATDKKA. The segment at 89 to 119 is disordered; sequence TTKSTKEKAATDKKAKVTKKPKTKTTTDVKK.

The protein belongs to the bacterial ribosomal protein bS16 family.

The sequence is that of Small ribosomal subunit protein bS16 from Spiroplasma kunkelii.